Here is a 594-residue protein sequence, read N- to C-terminus: Glutamate decarboxylase 1 (594 aa).

Residues methionine 1–serine 13 are compositionally biased toward low complexity. Residues methionine 1–asparagine 23 are disordered. At serine 78 the chain carries Phosphoserine. Glutamine 190 to serine 192 lines the 4-aminobutanoate pocket. The residue at position 405 (lysine 405) is an N6-(pyridoxal phosphate)lysine. Arginine 567 contributes to the 4-aminobutanoate binding site.

It belongs to the group II decarboxylase family. As to quaternary structure, homodimer. Pyridoxal 5'-phosphate is required as a cofactor.

It carries out the reaction L-glutamate + H(+) = 4-aminobutanoate + CO2. Functionally, catalyzes the synthesis of the inhibitory neurotransmitter gamma-aminobutyric acid (GABA) with pyridoxal 5'-phosphate as cofactor. The sequence is that of Glutamate decarboxylase 1 (GAD1) from Pongo abelii (Sumatran orangutan).